Consider the following 68-residue polypeptide: Large ribosomal subunit protein bL33c (68 aa).

It belongs to the bacterial ribosomal protein bL33 family.

Its subcellular location is the plastid. In Cuscuta reflexa (Southern Asian dodder), this protein is Large ribosomal subunit protein bL33c.